The chain runs to 936 residues: MKSSVSWLFFSSIPLFSSLSIVAAEVTLDSSNNSYDGSNGTTFTVFSTTDAAAGTTYSLLSDVSFQNAGALGIPLASGCFLEAGGDLTFQGNQHALKFAFINAGSSAGTVASTSAADKNLLFNDFSRLSIISCPSLLLSPTGQCALKSVGNLSLTGNSQIIFTQNFSSDNGGVINTKNFLLSGTSQFASFSRNQAFTGKQGGVVYATGTITIENSPGIVSFSQNLAKGSGGALYSTDNCSITDNFQVIFDGNSAWEAAQAQGGAICCTTTDKTVTLTGNKNLSFTNNTALTYGGAISGLKVSISAGGPTLFQSNISGSSAGQGGGGAINIASAGELALSATSGDITFNNNQVTNGSTSTRNAINIIDTAKVTSIRAATGQSIYFYDPITNPGTAASTDTLNLNLADANSEIEYGGAIVFSGEKLSPTEKAIAANVTSTIRQPAVLARGDLVLRDGVTVTFKDLTQSPGSRILMDGGTTLSAKEANLSLNGLAVNLSSLDGTNKAALKTEAADKNISLSGTIALIDTEGSFYENHNLKSASTYPLLELTTAGANGTITLGALSTLTLQEPETHYGYQGNWQLSWANATSSKIGSINWTRTGYIPSPERKSNLPLNSLWGNFIDIRSINQLIETKSSGEPFERELWLSGIANFFYRDSMPTRHGFRHISGGYALGITATTPAEDQLTFAFCQLFARDRNHITGKNHGDTYGASLYFHHTEGLFDIANFLWGKATRAPWVLSEISQIIPLSFDAKFSYLHTDNHMKTYYTDNSIIKGSWRNDAFCADLGASLPFVISVPYLLKEVEPFVKVQYIYAHQQDFYERYAEGRAFNKSELINVEIPIGVTFERDSKSEKGTYDLTLMYILDAYRRNPKCQTSLIASDANWMAYGTNLARQGFSVRAANHFQVNPHMEIFGQFAFEVRSSSRNYNTNLGSKFCF.

Positions Met1–Ala23 are cleaved as a signal peptide. The Autotransporter domain occupies Gly636–Phe936.

This sequence belongs to the PMP outer membrane protein family.

The protein resides in the secreted. Its subcellular location is the cell wall. The protein localises to the cell outer membrane. The protein is Probable outer membrane protein pmp7 (pmp7) of Chlamydia pneumoniae (Chlamydophila pneumoniae).